A 113-amino-acid polypeptide reads, in one-letter code: Protein translation factor SUI1 homolog 2 (113 aa).

Residue S2 is modified to N-acetylserine.

Belongs to the SUI1 family.

Probably involved in translation. The polypeptide is Protein translation factor SUI1 homolog 2 (Arabidopsis thaliana (Mouse-ear cress)).